Consider the following 1146-residue polypeptide: Probable phospholipid-transporting ATPase IIB (1146 aa).

Topologically, residues 1–143 are cytoplasmic; it reads MADQIPLYPV…IKNQKYNVFT (143 aa). Residues 144–164 form a helical membrane-spanning segment; it reads FIPGVLYEQFKFFLNLYFLVV. Residues 165 to 172 lie on the Extracellular side of the membrane; sequence SCSQFVPA. Residues 173–193 form a helical membrane-spanning segment; sequence LKIGYLYTYWAPLGFVLAVTI. The Cytoplasmic segment spans residues 194 to 381; it reads AREAIDEFRR…LDLELNQLTK (188 aa). Residues 382–402 form a helical membrane-spanning segment; sequence ALFLALVVLSVVMVTLQGFAG. The Extracellular portion of the chain corresponds to 403–407; the sequence is PWYRN. The helical transmembrane segment at 408 to 427 threads the bilayer; that stretch reads LFRFLLLFSYIIPISLRVNL. The Cytoplasmic segment spans residues 428–938; it reads DMGKAAYGWM…ALGQFVMHRG (511 aa). The active-site 4-aspartylphosphate intermediate is the aspartate 467. ATP contacts are provided by aspartate 467, lysine 468, and threonine 469. Residue aspartate 467 coordinates Mg(2+). Residue threonine 469 coordinates Mg(2+). Residues 508 to 519 are compositionally biased toward polar residues; the sequence is VHSQPSGHNPSS. The tract at residues 508–535 is disordered; it reads VHSQPSGHNPSSAPLRRSQSSTPKVKKS. ATP is bound by residues glutamate 590, phenylalanine 632, lysine 637, lysine 656, arginine 685, threonine 686, threonine 765, glycine 766, aspartate 767, arginine 847, and lysine 853. Aspartate 873 provides a ligand contact to Mg(2+). The ATP site is built by asparagine 876 and aspartate 877. Residue aspartate 877 participates in Mg(2+) binding. A helical membrane pass occupies residues 939-959; it reads LIISTMQAVFSSVFYFASVPL. Residues 960–961 lie on the Extracellular side of the membrane; sequence YQ. The chain crosses the membrane as a helical span at residues 962–982; that stretch reads GFLMVGYATIYTMFPVFSLVL. Over 983-1011 the chain is Cytoplasmic; the sequence is DQDVKPEMAILYPELYKDLTKGRSLSFKT. A helical membrane pass occupies residues 1012 to 1032; the sequence is FLIWVLISIYQGGILMYGALL. Residues 1033–1040 are Extracellular-facing; it reads LFEDEFVH. The helical transmembrane segment at 1041–1061 threads the bilayer; it reads VVAISFTALILTELLMVALTI. The Cytoplasmic portion of the chain corresponds to 1062–1065; sequence RTWH. Residues 1066–1086 form a helical membrane-spanning segment; the sequence is WLMVVAEFLSLGCYVASLAFL. The Extracellular segment spans residues 1087 to 1105; sequence NEYFGIGRVSFGAFLDVAF. A helical transmembrane segment spans residues 1106–1128; it reads ITTVTFLWKVSAITVVSCLPLYV. Residues 1129 to 1146 lie on the Cytoplasmic side of the membrane; sequence LKYLKRKLSPPSYSKLSS.

It belongs to the cation transport ATPase (P-type) (TC 3.A.3) family. Type IV subfamily. It depends on Mg(2+) as a cofactor. Found in most tissues except spleen and muscle. Most abundant in testis. Also detected in fetal tissues.

It is found in the golgi apparatus. It localises to the trans-Golgi network membrane. The catalysed reaction is ATP + H2O + phospholipidSide 1 = ADP + phosphate + phospholipidSide 2.. The polypeptide is Probable phospholipid-transporting ATPase IIB (Atp9b) (Mus musculus (Mouse)).